A 215-amino-acid chain; its full sequence is Octanoyltransferase (215 aa).

The BPL/LPL catalytic domain maps to 31-206 (TTAPDEIWLV…QLVKHLDYAE (176 aa)). Residues 70–77 (RGGQVTYH), 137–139 (SLG), and 150–152 (GLA) contribute to the substrate site. The Acyl-thioester intermediate role is filled by C168.

The protein belongs to the LipB family.

The protein localises to the cytoplasm. It catalyses the reaction octanoyl-[ACP] + L-lysyl-[protein] = N(6)-octanoyl-L-lysyl-[protein] + holo-[ACP] + H(+). It participates in protein modification; protein lipoylation via endogenous pathway; protein N(6)-(lipoyl)lysine from octanoyl-[acyl-carrier-protein]: step 1/2. Its function is as follows. Catalyzes the transfer of endogenously produced octanoic acid from octanoyl-acyl-carrier-protein onto the lipoyl domains of lipoate-dependent enzymes. Lipoyl-ACP can also act as a substrate although octanoyl-ACP is likely to be the physiological substrate. The chain is Octanoyltransferase from Pseudomonas fluorescens (strain Pf0-1).